The following is a 61-amino-acid chain: Truncated Cytokine response-modifying protein B (61 aa).

Functionally, the protein is truncated in this strain and presumably inactive. It has similarities with variola virus CrmB, but the product is inactivated due to several premature stop codon. The chain is Truncated Cytokine response-modifying protein B from Bos taurus (Bovine).